Here is a 779-residue protein sequence, read N- to C-terminus: MFTKWRIFAVNHQRTFSVHLNTMCYCKIKANLKRLKTQLPLTRNYSSAPGIAGSDVKSLHSVINPPVAKIRNIGIMAHIDAGKTTTTERILYYSGYTRSLGDVDDGDTVTDFMAQERERGITIQSAAVTLDWKGYRVNLIDTPGHVDFTLEVERCLRVLDGAVAVFDASAGVEAQTLTVWRQADKHKIPRICFLNKMDKTGASFNYAVESIREKLKAKPLILQLPIGEARTFQGVVDVVNKEKLLWNSNSDDGKDFERMPLSEASDRELLKETIEARNSLIEQVADLDDEFADLVLGEFSENFDLVPAEKLQAAVHRVTLAQAAVPVLCGSALKNKGVQPLLDAVTTYLPSPEEREDRFLQWYEGDLCALAFKVLHDKQRGPLVFLRIYSGTLTPQLAVHNINRNCTERMSRLLLPFADQHVEIPSLTAGNIALTVGLKQTATGDTIVSSKSSALAAARRAGRGEREHGKKREAESLLLAGVEVPEPVFFCTIEPPSVAKQPDLDHALERLQREDPSLKVKLDPDSGQTVLCGMGELHIEIIHDRIKREYGLETYLGPLQVAYRETILNSVRATDTLDRVLGDKRHLVSAELEVRPAEEPCAVAKIEYADCVGEDLLQASREAIESAVHSACLQGPLLGSPVQDVAMTLHSLMIHPGTSTTMVTACISRCMQKALKKADKQVLEPLMSLEVTVSREYLSPVLADLAQRRGNIQEIQTRQDNRVVLGFVPLAEIMGYSTVLRTLTSGSATFALELSTYQAMSPQDQSALLNQRSGLAHVL.

The tr-type G domain occupies 68–353 (AKIRNIGIMA…AVTTYLPSPE (286 aa)). GTP-binding positions include 77-84 (AHIDAGKT), 141-145 (DTPGH), and 195-198 (NKMD).

Belongs to the TRAFAC class translation factor GTPase superfamily. Classic translation factor GTPase family. EF-G/EF-2 subfamily.

Its subcellular location is the mitochondrion. The enzyme catalyses GTP + H2O = GDP + phosphate + H(+). Mitochondrial GTPase that mediates the disassembly of ribosomes from messenger RNA at the termination of mitochondrial protein biosynthesis. Acts in collaboration with MRRF. GTP hydrolysis follows the ribosome disassembly and probably occurs on the ribosome large subunit. Not involved in the GTP-dependent ribosomal translocation step during translation elongation. The protein is Ribosome-releasing factor 2, mitochondrial (Gfm2) of Mus musculus (Mouse).